Here is a 336-residue protein sequence, read N- to C-terminus: 3-isopropylmalate dehydrogenase (336 aa).

Residues arginine 87, arginine 97, arginine 121, and aspartate 211 each contribute to the substrate site. Mg(2+)-binding residues include aspartate 211, aspartate 235, and aspartate 239. 271-283 (GSAPDIAGQGIAD) lines the NAD(+) pocket.

It belongs to the isocitrate and isopropylmalate dehydrogenases family. LeuB type 2 subfamily. As to quaternary structure, homodimer. Requires Mg(2+) as cofactor. Mn(2+) is required as a cofactor.

The protein resides in the cytoplasm. The enzyme catalyses (2R,3S)-3-isopropylmalate + NAD(+) = 4-methyl-2-oxopentanoate + CO2 + NADH. Its pathway is amino-acid biosynthesis; L-leucine biosynthesis; L-leucine from 3-methyl-2-oxobutanoate: step 3/4. Functionally, catalyzes the oxidation of 3-carboxy-2-hydroxy-4-methylpentanoate (3-isopropylmalate) to 3-carboxy-4-methyl-2-oxopentanoate. The product decarboxylates to 4-methyl-2 oxopentanoate. This chain is 3-isopropylmalate dehydrogenase, found in Mycobacterium sp. (strain JLS).